The chain runs to 231 residues: MKLPQPLFQGTLIRRYQRFLADVELEDGTVVTAHTPNTGSMMGCACPGNRVLLSKSASLTRKYPHSWELVQADGTWVGINTQLPNLLAREAILDGTISELSGYRQIRGEVPYGSGSRIDLLLSGERGLCYVETKNVTLVKDGVALFPDAVSARGQKHLRELMEMVRQGHRAVNLFIVQRADGVALAPADAIDPVYGRLLREAAQNGVEILAYRAEVTRTEVRLERALPVLL.

The protein belongs to the SfsA family.

The chain is Sugar fermentation stimulation protein homolog from Geobacter sp. (strain M21).